Here is a 364-residue protein sequence, read N- to C-terminus: Nucleosome assembly protein 1;2 (364 aa).

Positions 32 to 86 form a coiled coil; that stretch reads VESIKNTLQGLAARHTDVLESLEPKVRKRVEVLREIQSQHDDLEAKFFEERAALE. Residues 53–68 carry the Nuclear export signal motif; it reads LEPKVRKRVEVLREIQ. The Nuclear localization signal signature appears at 227 to 232; sequence KKKPKK. Disordered regions lie at residues 250–269 and 301–364; these read FNFF…DEDT and GEAA…CKQQ. 2 stretches are compositionally biased toward acidic residues: residues 259 to 269 and 304 to 340; these read PDDDEEIDEDT and AQDE…DDED. Residue Cys361 is modified to Cysteine methyl ester. Residue Cys361 is the site of S-farnesyl cysteine attachment. Residues 362 to 364 constitute a propeptide, removed in mature form; the sequence is KQQ.

It belongs to the nucleosome assembly protein (NAP) family. In terms of assembly, binds preferentially histone H1 in vitro. In terms of tissue distribution, highly expressed in tissues exhibiting active cell-division activities, such as root and shoot meristems and young flowers.

The protein localises to the nucleus. Its subcellular location is the cytoplasm. Its function is as follows. May modulate chromatin structure by regulation of nucleosome assembly/disassembly. The chain is Nucleosome assembly protein 1;2 (NAP1;2) from Oryza sativa subsp. indica (Rice).